A 194-amino-acid polypeptide reads, in one-letter code: Probable GTP-binding protein EngB (194 aa).

Residues 22 to 194 form the EngB-type G domain; that stretch reads DLPEYALAGR…AWQFIKEGME (173 aa). GTP is bound by residues 30–37, 57–61, 75–78, 142–145, and 174–176; these read GRSNVGKS, GKTQT, DVPG, TKAD, and FSS. Ser37 and Thr59 together coordinate Mg(2+).

It belongs to the TRAFAC class TrmE-Era-EngA-EngB-Septin-like GTPase superfamily. EngB GTPase family. Mg(2+) is required as a cofactor.

In terms of biological role, necessary for normal cell division and for the maintenance of normal septation. In Listeria monocytogenes serotype 4b (strain CLIP80459), this protein is Probable GTP-binding protein EngB.